The primary structure comprises 414 residues: S-adenosylmethionine synthase (414 aa).

ATP is bound at residue histidine 11. Residue aspartate 13 coordinates Mg(2+). Glutamate 39 lines the K(+) pocket. L-methionine contacts are provided by glutamate 52 and glutamine 95. Positions 95–105 (QSPDIAQGVNM) are flexible loop. ATP contacts are provided by residues 169–171 (DGK), 245–246 (KF), aspartate 254, 260–261 (RK), alanine 277, and lysine 281. Position 254 (aspartate 254) interacts with L-methionine. Residue lysine 285 participates in L-methionine binding.

This sequence belongs to the AdoMet synthase family. Homotetramer; dimer of dimers. Requires Mg(2+) as cofactor. It depends on K(+) as a cofactor.

The protein localises to the cytoplasm. It catalyses the reaction L-methionine + ATP + H2O = S-adenosyl-L-methionine + phosphate + diphosphate. It functions in the pathway amino-acid biosynthesis; S-adenosyl-L-methionine biosynthesis; S-adenosyl-L-methionine from L-methionine: step 1/1. Functionally, catalyzes the formation of S-adenosylmethionine (AdoMet) from methionine and ATP. The overall synthetic reaction is composed of two sequential steps, AdoMet formation and the subsequent tripolyphosphate hydrolysis which occurs prior to release of AdoMet from the enzyme. The polypeptide is S-adenosylmethionine synthase (Synechococcus sp. (strain JA-2-3B'a(2-13)) (Cyanobacteria bacterium Yellowstone B-Prime)).